A 669-amino-acid chain; its full sequence is Alpha-1,4-glucan:maltose-1-phosphate maltosyltransferase 2 (669 aa).

3 residues coordinate alpha-maltose 1-phosphate: lysine 255, glutamine 315, and aspartate 350. Aspartate 385 (nucleophile) is an active-site residue. Asparagine 386 is a binding site for alpha-maltose 1-phosphate. The active-site Proton donor is the glutamate 414. Alpha-maltose 1-phosphate is bound at residue 525–526 (KY).

The protein belongs to the glycosyl hydrolase 13 family. GlgE subfamily. Homodimer.

The enzyme catalyses alpha-maltose 1-phosphate + [(1-&gt;4)-alpha-D-glucosyl](n) = [(1-&gt;4)-alpha-D-glucosyl](n+2) + phosphate. Maltosyltransferase that uses maltose 1-phosphate (M1P) as the sugar donor to elongate linear or branched alpha-(1-&gt;4)-glucans. Maltooligosaccharides with a degree of polymerization (DP) superior or equal to 4 are efficient acceptors, with DP6 being optimal in the GlgE-catalyzed polymerization with M1P. Is probably involved in a branched alpha-glucan biosynthetic pathway from trehalose, together with TreS, Mak and GlgB. In Streptomyces coelicolor (strain ATCC BAA-471 / A3(2) / M145), this protein is Alpha-1,4-glucan:maltose-1-phosphate maltosyltransferase 2 (glgE2).